A 99-amino-acid chain; its full sequence is Turripeptide OL71 (99 aa).

Contains 5 disulfide bonds. Expressed by the venom duct.

The protein resides in the secreted. In terms of biological role, acts as a neurotoxin by inhibiting an ion channel. In Iotyrris olangoensis (Sea snail), this protein is Turripeptide OL71.